Here is a 247-residue protein sequence, read N- to C-terminus: ATP synthase subunit a, chloroplastic (247 aa).

Helical transmembrane passes span Gln-38–Val-58, Val-95–Leu-115, Ile-134–Thr-154, Leu-199–Leu-219, and Gly-220–Gly-240.

Belongs to the ATPase A chain family. In terms of assembly, F-type ATPases have 2 components, CF(1) - the catalytic core - and CF(0) - the membrane proton channel. CF(1) has five subunits: alpha(3), beta(3), gamma(1), delta(1), epsilon(1). CF(0) has four main subunits: a, b, b' and c.

It is found in the plastid. Its subcellular location is the chloroplast thylakoid membrane. In terms of biological role, key component of the proton channel; it plays a direct role in the translocation of protons across the membrane. This chain is ATP synthase subunit a, chloroplastic, found in Ranunculus macranthus (Large buttercup).